Consider the following 427-residue polypeptide: Serine hydroxymethyltransferase (427 aa).

(6S)-5,6,7,8-tetrahydrofolate contacts are provided by residues Leu-122 and 126-128 (GHL). N6-(pyridoxal phosphate)lysine is present on Lys-231.

Belongs to the SHMT family. As to quaternary structure, homodimer. It depends on pyridoxal 5'-phosphate as a cofactor.

The protein localises to the cytoplasm. It catalyses the reaction (6R)-5,10-methylene-5,6,7,8-tetrahydrofolate + glycine + H2O = (6S)-5,6,7,8-tetrahydrofolate + L-serine. Its pathway is one-carbon metabolism; tetrahydrofolate interconversion. It functions in the pathway amino-acid biosynthesis; glycine biosynthesis; glycine from L-serine: step 1/1. In terms of biological role, catalyzes the reversible interconversion of serine and glycine with tetrahydrofolate (THF) serving as the one-carbon carrier. This reaction serves as the major source of one-carbon groups required for the biosynthesis of purines, thymidylate, methionine, and other important biomolecules. Also exhibits THF-independent aldolase activity toward beta-hydroxyamino acids, producing glycine and aldehydes, via a retro-aldol mechanism. The polypeptide is Serine hydroxymethyltransferase (Acidobacterium capsulatum (strain ATCC 51196 / DSM 11244 / BCRC 80197 / JCM 7670 / NBRC 15755 / NCIMB 13165 / 161)).